A 507-amino-acid polypeptide reads, in one-letter code: UDP-N-acetylglucosamine 1-carboxyvinyltransferase 1 (507 aa).

Residue 41-42 participates in phosphoenolpyruvate binding; it reads KN. Arginine 112 contributes to the UDP-N-acetyl-alpha-D-glucosamine binding site. The active-site Proton donor is cysteine 136. Cysteine 136 carries the post-translational modification 2-(S-cysteinyl)pyruvic acid O-phosphothioketal. UDP-N-acetyl-alpha-D-glucosamine is bound by residues 141 to 145, aspartate 328, and leucine 350; that span reads RPIDL.

The protein belongs to the EPSP synthase family. MurA subfamily.

It is found in the cytoplasm. The enzyme catalyses phosphoenolpyruvate + UDP-N-acetyl-alpha-D-glucosamine = UDP-N-acetyl-3-O-(1-carboxyvinyl)-alpha-D-glucosamine + phosphate. It functions in the pathway cell wall biogenesis; peptidoglycan biosynthesis. Functionally, cell wall formation. Adds enolpyruvyl to UDP-N-acetylglucosamine. The sequence is that of UDP-N-acetylglucosamine 1-carboxyvinyltransferase 1 from Legionella pneumophila (strain Lens).